A 252-amino-acid chain; its full sequence is NADP-dependent (R)-specific alcohol dehydrogenase (252 aa).

NADP(+)-binding positions include 16–19 (TLGI), 39–40 (RH), 63–64 (DA), Asn90, Tyr156, Lys160, and 191–195 (IKTPL). The Proton donor/acceptor role is filled by Tyr156. Position 252 (Gln252) interacts with Mg(2+).

It belongs to the short-chain dehydrogenases/reductases (SDR) family. In terms of assembly, homotetramer. Requires Mg(2+) as cofactor.

It carries out the reaction a secondary alcohol + NADP(+) = a ketone + NADPH + H(+). The enzyme catalyses acetophenone + NADPH + H(+) = (R)-1-phenylethanol + NADP(+). The catalysed reaction is 2,5-hexanedione + 2 NADPH + 2 H(+) = (2R,5R)-hexanediol + 2 NADP(+). It catalyses the reaction ethyl 3-oxobutanoate + NADPH + H(+) = ethyl (R)-3-hydroxybutanoate + NADP(+). It carries out the reaction 2-octanone + NADPH + H(+) = (2R)-octan-2-ol + NADP(+). In terms of biological role, NADP-dependent (R)-specific alcohol dehydrogenase (ADH) with a broad substrate specificity, able to catalyze in vitro the stereoselective reduction of several aliphatic and aromatic ketones as well as beta-keto esters to the corresponding enantiomerically pure alcohols. The protein is NADP-dependent (R)-specific alcohol dehydrogenase of Lentilactobacillus kefiri (Lactobacillus kefiri).